Consider the following 160-residue polypeptide: MFGMGFFEILVVLVVAIIFLGPEKFPQAVVDVVKFFRAVKKTLNDAKDTLDKEINIEEIKKETLEYQKLFENKVESLKGVKIEELEDAKVTAENEIKSIQDLMQDYQKSLETNTIPNHLNEEVSNEEALNKEVSSDESPKEVQLATDNNTKEHDKEKENV.

Residues 1–21 (MFGMGFFEILVVLVVAIIFLG) form a helical membrane-spanning segment. The interval 118 to 160 (HLNEEVSNEEALNKEVSSDESPKEVQLATDNNTKEHDKEKENV) is disordered. Composition is skewed to basic and acidic residues over residues 128 to 140 (ALNK…ESPK) and 149 to 160 (NTKEHDKEKENV).

Belongs to the TatB family. As to quaternary structure, the Tat system comprises two distinct complexes: a TatABC complex, containing multiple copies of TatA, TatB and TatC subunits, and a separate TatA complex, containing only TatA subunits. Substrates initially bind to the TatABC complex, which probably triggers association of the separate TatA complex to form the active translocon.

Its subcellular location is the cell inner membrane. Functionally, part of the twin-arginine translocation (Tat) system that transports large folded proteins containing a characteristic twin-arginine motif in their signal peptide across membranes. Together with TatC, TatB is part of a receptor directly interacting with Tat signal peptides. TatB may form an oligomeric binding site that transiently accommodates folded Tat precursor proteins before their translocation. The protein is Sec-independent protein translocase protein TatB of Helicobacter pylori (strain ATCC 700392 / 26695) (Campylobacter pylori).